The sequence spans 216 residues: MSGTRAGGTADVGLIIAVKRLAAAKTRLGPVFSTRTRENVVLAMLVDTLTAAAPVSALRSITVITPDEAAAAAAAEFGAEILADPTPDGHGDPLNNAIAAAEHAIAGSFSNIVVLQGDLPALQTQELSEAIAAARHHQRSFVADRLGSGTAALCTFGTALNPQFGPDSSAQHRRSGAIELTGPWPGLRCDVDTPADLAAARRLGIGAATTRVVAHL.

Thr150, Gly165, and Ser168 together coordinate phosphoenolpyruvate.

This sequence belongs to the CofC family.

It carries out the reaction phosphoenolpyruvate + GTP + H(+) = enolpyruvoyl-2-diphospho-5'-guanosine + diphosphate. Its pathway is cofactor biosynthesis; coenzyme F420 biosynthesis. Guanylyltransferase that catalyzes the activation of phosphoenolpyruvate (PEP) as enolpyruvoyl-2-diphospho-5'-guanosine, via the condensation of PEP with GTP. It is involved in the biosynthesis of coenzyme F420, a hydride carrier cofactor. The protein is Phosphoenolpyruvate guanylyltransferase of Mycobacterium leprae (strain Br4923).